Here is a 416-residue protein sequence, read N- to C-terminus: Probable protein phosphatase 2C 75 (416 aa).

Disordered regions lie at residues 1 to 20 and 32 to 51; these read MTEI…SPTK and RRQA…DRTD. In terms of domain architecture, PPM-type phosphatase spans 108-411; it reads LYGIVSVMGR…DNISVVVIDL (304 aa). Mn(2+)-binding residues include D149, G150, D337, and D402.

It belongs to the PP2C family. Requires Mg(2+) as cofactor. Mn(2+) is required as a cofactor.

It carries out the reaction O-phospho-L-seryl-[protein] + H2O = L-seryl-[protein] + phosphate. The catalysed reaction is O-phospho-L-threonyl-[protein] + H2O = L-threonyl-[protein] + phosphate. Functionally, negative regulator of abscisic acid (ABA) responses during seed germination. The sequence is that of Probable protein phosphatase 2C 75 (AHG1) from Arabidopsis thaliana (Mouse-ear cress).